Reading from the N-terminus, the 450-residue chain is Regulator of sigma E protease (450 aa).

His-22 is a Zn(2+) binding site. The active site involves Glu-23. Residue His-26 participates in Zn(2+) binding. A helical membrane pass occupies residues 98–120 (AAIIAAGPVANFIFAIFAYWLVF). PDZ domains follow at residues 115 to 186 (AYWL…APFG) and 199 to 291 (HWAF…TPDT). Transmembrane regions (helical) follow at residues 376–398 (VIYY…LFPL) and 426–445 (FSYR…ALFN).

The protein belongs to the peptidase M50B family. Interacts with RseA. The cofactor is Zn(2+).

The protein localises to the cell inner membrane. Functionally, a site-2 regulated intramembrane protease (S2P) that cleaves the peptide bond between 'Ala-108' and 'Cys-109' in the transmembrane region of RseA. Part of a regulated intramembrane proteolysis (RIP) cascade. Acts on DegS-cleaved RseA to release the cytoplasmic domain of RseA. This provides the cell with sigma-E (RpoE) activity through the proteolysis of RseA. The protein is Regulator of sigma E protease (rseP) of Salmonella typhi.